Consider the following 240-residue polypeptide: Probable transcriptional regulatory protein HPAG1_0159 (240 aa).

It belongs to the TACO1 family.

It localises to the cytoplasm. This chain is Probable transcriptional regulatory protein HPAG1_0159, found in Helicobacter pylori (strain HPAG1).